Reading from the N-terminus, the 177-residue chain is Inner membrane-spanning protein YciB (177 aa).

The next 5 membrane-spanning stretches (helical) occupy residues 22–42 (IFIA…LYWI), 50–70 (INLF…IFHN), 76–96 (WKIT…QFFM), 121–141 (FFWA…ALCL), and 151–171 (VFGL…YINF).

It belongs to the YciB family.

It localises to the cell inner membrane. In terms of biological role, plays a role in cell envelope biogenesis, maintenance of cell envelope integrity and membrane homeostasis. The polypeptide is Inner membrane-spanning protein YciB (Buchnera aphidicola subsp. Schizaphis graminum (strain Sg)).